The sequence spans 377 residues: tRNA/tmRNA (uracil-C(5))-methyltransferase (377 aa).

Positions 199, 227, 232, 248, and 308 each coordinate S-adenosyl-L-methionine. Catalysis depends on cysteine 333, which acts as the Nucleophile. Glutamate 367 acts as the Proton acceptor in catalysis.

It belongs to the class I-like SAM-binding methyltransferase superfamily. RNA M5U methyltransferase family. TrmA subfamily.

It catalyses the reaction uridine(54) in tRNA + S-adenosyl-L-methionine = 5-methyluridine(54) in tRNA + S-adenosyl-L-homocysteine + H(+). The catalysed reaction is uridine(341) in tmRNA + S-adenosyl-L-methionine = 5-methyluridine(341) in tmRNA + S-adenosyl-L-homocysteine + H(+). Functionally, dual-specificity methyltransferase that catalyzes the formation of 5-methyluridine at position 54 (m5U54) in all tRNAs, and that of position 341 (m5U341) in tmRNA (transfer-mRNA). In Aeromonas salmonicida (strain A449), this protein is tRNA/tmRNA (uracil-C(5))-methyltransferase.